A 353-amino-acid chain; its full sequence is Photosystem II D2 protein (353 aa).

Thr2 is modified (N-acetylthreonine). Thr2 bears the Phosphothreonine mark. A helical transmembrane segment spans residues 41 to 61; the sequence is CAYFALGGWFTGTTFVTSWYT. Residue His118 participates in chlorophyll a binding. The chain crosses the membrane as a helical span at residues 125–141; sequence GFMLRQFEIARSVQLRP. Residues Gln130 and Asn143 each contribute to the pheophytin a site. The helical transmembrane segment at 153-166 threads the bilayer; it reads VFVSVFLIYPLGQS. Position 198 (His198) interacts with chlorophyll a. A helical membrane pass occupies residues 208–228; the sequence is AALLCAIHGATVENTLFEDGD. A plastoquinone is bound by residues His215 and Phe262. His215 contacts Fe cation. His269 contacts Fe cation. Residues 279–295 traverse the membrane as a helical segment; that stretch reads GLWMSALGVVGLALNLR.

This sequence belongs to the reaction center PufL/M/PsbA/D family. PSII is composed of 1 copy each of membrane proteins PsbA, PsbB, PsbC, PsbD, PsbE, PsbF, PsbH, PsbI, PsbJ, PsbK, PsbL, PsbM, PsbT, PsbX, PsbY, PsbZ, Psb30/Ycf12, at least 3 peripheral proteins of the oxygen-evolving complex and a large number of cofactors. It forms dimeric complexes. The D1/D2 heterodimer binds P680, chlorophylls that are the primary electron donor of PSII, and subsequent electron acceptors. It shares a non-heme iron and each subunit binds pheophytin, quinone, additional chlorophylls, carotenoids and lipids. There is also a Cl(-1) ion associated with D1 and D2, which is required for oxygen evolution. The PSII complex binds additional chlorophylls, carotenoids and specific lipids. is required as a cofactor.

The protein localises to the plastid. It is found in the chloroplast thylakoid membrane. The enzyme catalyses 2 a plastoquinone + 4 hnu + 2 H2O = 2 a plastoquinol + O2. Its function is as follows. Photosystem II (PSII) is a light-driven water:plastoquinone oxidoreductase that uses light energy to abstract electrons from H(2)O, generating O(2) and a proton gradient subsequently used for ATP formation. It consists of a core antenna complex that captures photons, and an electron transfer chain that converts photonic excitation into a charge separation. The D1/D2 (PsbA/PsbD) reaction center heterodimer binds P680, the primary electron donor of PSII as well as several subsequent electron acceptors. D2 is needed for assembly of a stable PSII complex. This is Photosystem II D2 protein from Oenothera argillicola (Appalachian evening primrose).